Reading from the N-terminus, the 537-residue chain is Ceramide kinase (537 aa).

Residues 1–115 (MGATGAAEPL…CPEEQLCHLW (115 aa)) form an essential for enzyme activity region. A required for binding to sulfatide and phosphoinositides region spans residues 1 to 125 (MGATGAAEPL…LQTLREMLEK (125 aa)). In terms of domain architecture, DAGKc spans 128–278 (SRPKHLLVFI…MDVSSVHHNS (151 aa)). ATP contacts are provided by residues 138-140 (NPF) and 170-174 (TEHAN). 195–198 (GGDG) contacts substrate. The active-site Proton donor/acceptor is aspartate 197. ATP-binding positions include glutamate 202, 239-241 (GST), arginine 304, and arginine 310. Phosphoserine is present on residues serine 340 and serine 408. 502–504 (DGE) contributes to the ATP binding site.

Ca(2+) serves as cofactor. Requires Mg(2+) as cofactor. High level expression in heart, brain, skeletal muscle, kidney and liver; moderate in peripheral blood leukocytes and thymus; very low in spleen, small intestine, placenta and lung.

It localises to the cytoplasm. Its subcellular location is the cell membrane. It catalyses the reaction an N-acylsphing-4-enine + ATP = an N-acylsphing-4-enine 1-phosphate + ADP + H(+). The enzyme catalyses N-(hexanoyl)sphing-4-enine + ATP = N-hexanoylsphing-4-enine 1-phosphate + ADP + H(+). It carries out the reaction N-(acetyl)-sphing-4-enine + ATP = N-(acetyl)-sphing-4-enine-1-phosphate + ADP + H(+). The catalysed reaction is N-hexadecanoylsphing-4-enine + ATP = N-(hexadecanoyl)-sphing-4-enine-1-phosphate + ADP + H(+). It catalyses the reaction N-hexanoyl-(4R)-hydroxysphinganine + ATP = N-hexanoyl-(4R)-hydroxysphinganine-1-phosphate + ADP + H(+). Inhibited by sulfatide. Inhibited by sphinganine, sphingenine, and N,N-Dimethylsphingosine (DMS). Cardiolipin at 0.1 uM significantly increases activity, whereas at concentrations &gt;1 uM has an inhibitory effect. Catalyzes specifically the phosphorylation of ceramide to form ceramide 1-phosphate. Acts efficiently on natural and analog ceramides (C6, C8, C16 ceramides, and C8-dihydroceramide), to a lesser extent on C2-ceramide and C6-dihydroceramide, but not on other lipids, such as various sphingosines. Shows a greater preference for D-erythro isomer of ceramides. Binds phosphoinositides. This chain is Ceramide kinase (CERK), found in Homo sapiens (Human).